Reading from the N-terminus, the 356-residue chain is MKKIVLVAGGTGGHFFPAVALGEELIKRKYEVHFITDLRCEKYINHDAGLIFHVIDLKRPKNILLFLPLLSLAIFKAIKLLFSLSPSAVVGFGGYPVVASMFAAIFLRVPIVIHEQNSYLGKVNRFFANFAKKIAISYKNTKNLPVVVKNRTVVTGGIVRKNIRGLDSVVKRRNDKDRTFKIFIFGGSQGAKLFSELIPESIKALMQKQPNLKLHITQQAALDDQVKIKNIYSNLNINYELAEFFDNMANQYKNTDLVISRAGASTIEELTYIGLPAIFIPLPSAADNHQYHNAKLLEDEKCGWCMKQDDISSEKLAEKIFELISNPKILENTSKNLLKRRKEGHKLLSNLIEELI.

UDP-N-acetyl-alpha-D-glucosamine contacts are provided by residues 11–13 (TGG), Asn-117, Arg-160, Ser-188, and Gln-290.

Belongs to the glycosyltransferase 28 family. MurG subfamily.

Its subcellular location is the cell inner membrane. It catalyses the reaction di-trans,octa-cis-undecaprenyl diphospho-N-acetyl-alpha-D-muramoyl-L-alanyl-D-glutamyl-meso-2,6-diaminopimeloyl-D-alanyl-D-alanine + UDP-N-acetyl-alpha-D-glucosamine = di-trans,octa-cis-undecaprenyl diphospho-[N-acetyl-alpha-D-glucosaminyl-(1-&gt;4)]-N-acetyl-alpha-D-muramoyl-L-alanyl-D-glutamyl-meso-2,6-diaminopimeloyl-D-alanyl-D-alanine + UDP + H(+). It functions in the pathway cell wall biogenesis; peptidoglycan biosynthesis. Functionally, cell wall formation. Catalyzes the transfer of a GlcNAc subunit on undecaprenyl-pyrophosphoryl-MurNAc-pentapeptide (lipid intermediate I) to form undecaprenyl-pyrophosphoryl-MurNAc-(pentapeptide)GlcNAc (lipid intermediate II). In Rickettsia bellii (strain RML369-C), this protein is UDP-N-acetylglucosamine--N-acetylmuramyl-(pentapeptide) pyrophosphoryl-undecaprenol N-acetylglucosamine transferase.